The sequence spans 150 residues: Cell division protein SepF (150 aa).

Positions 26–45 (DREEIPEEHESKDRTAYQSK) are disordered.

Belongs to the SepF family. Homodimer. Interacts with FtsZ.

It localises to the cytoplasm. In terms of biological role, cell division protein that is part of the divisome complex and is recruited early to the Z-ring. Probably stimulates Z-ring formation, perhaps through the cross-linking of FtsZ protofilaments. Its function overlaps with FtsA. The sequence is that of Cell division protein SepF from Bacillus licheniformis (strain ATCC 14580 / DSM 13 / JCM 2505 / CCUG 7422 / NBRC 12200 / NCIMB 9375 / NCTC 10341 / NRRL NRS-1264 / Gibson 46).